The chain runs to 440 residues: Xaa-Pro dipeptidase (440 aa).

Residues Asp-244, Asp-255, His-335, Glu-380, and Glu-419 each coordinate Mn(2+).

Belongs to the peptidase M24B family. Bacterial-type prolidase subfamily. The cofactor is Mn(2+).

The enzyme catalyses Xaa-L-Pro dipeptide + H2O = an L-alpha-amino acid + L-proline. Splits dipeptides with a prolyl residue in the C-terminal position. The chain is Xaa-Pro dipeptidase from Shewanella loihica (strain ATCC BAA-1088 / PV-4).